An 85-amino-acid chain; its full sequence is Small ribosomal subunit protein bS20 (85 aa).

It belongs to the bacterial ribosomal protein bS20 family.

Binds directly to 16S ribosomal RNA. The protein is Small ribosomal subunit protein bS20 of Ruminiclostridium cellulolyticum (strain ATCC 35319 / DSM 5812 / JCM 6584 / H10) (Clostridium cellulolyticum).